The primary structure comprises 510 residues: Probable cytosol aminopeptidase (510 aa).

The Mn(2+) site is built by lysine 268 and aspartate 273. Lysine 280 is an active-site residue. Mn(2+) is bound by residues aspartate 291, aspartate 350, and glutamate 352. Arginine 354 is a catalytic residue.

This sequence belongs to the peptidase M17 family. Requires Mn(2+) as cofactor.

It is found in the cytoplasm. It carries out the reaction Release of an N-terminal amino acid, Xaa-|-Yaa-, in which Xaa is preferably Leu, but may be other amino acids including Pro although not Arg or Lys, and Yaa may be Pro. Amino acid amides and methyl esters are also readily hydrolyzed, but rates on arylamides are exceedingly low.. The catalysed reaction is Release of an N-terminal amino acid, preferentially leucine, but not glutamic or aspartic acids.. Its function is as follows. Presumably involved in the processing and regular turnover of intracellular proteins. Catalyzes the removal of unsubstituted N-terminal amino acids from various peptides. The chain is Probable cytosol aminopeptidase from Micrococcus luteus (strain ATCC 4698 / DSM 20030 / JCM 1464 / CCM 169 / CCUG 5858 / IAM 1056 / NBRC 3333 / NCIMB 9278 / NCTC 2665 / VKM Ac-2230) (Micrococcus lysodeikticus).